The primary structure comprises 323 residues: Prostaglandin F synthase 1 (323 aa).

Residues 20-24 (GFGTY) and Asp50 contribute to the NADP(+) site. Residue Tyr55 is the Proton donor of the active site. Residue His117 participates in substrate binding. Residues 166–167 (SN), Gln190, 216–221 (YAALGA), and 270–280 (KSFNKKRIKEN) each bind NADP(+).

Belongs to the aldo/keto reductase family. In terms of assembly, monomer. In terms of processing, the N-terminus is blocked.

It localises to the cytoplasm. It catalyses the reaction prostaglandin F2alpha + NADP(+) = prostaglandin D2 + NADPH + H(+). The protein operates within lipid metabolism; prostaglandin biosynthesis. Functionally, catalyzes the reduction of PGD(2) and PGH(2) to PGF(2 alpha) and a stereoisomer, respectively. It has a broad substrate specificity and also reduces other carbonyl compounds. In Bos taurus (Bovine), this protein is Prostaglandin F synthase 1.